The following is a 38-amino-acid chain: Large ribosomal subunit protein bL36 (38 aa).

It belongs to the bacterial ribosomal protein bL36 family.

The chain is Large ribosomal subunit protein bL36 from Lacticaseibacillus casei (strain BL23) (Lactobacillus casei).